The following is a 330-amino-acid chain: Reaction center protein M chain (330 aa).

A run of 3 helical transmembrane segments spans residues 57 to 83, 115 to 144, and 147 to 172; these read GWTS…AQVG, GGWY…EQHK, and KHIF…ILMG. (7R,8Z)-bacteriochlorophyll b-binding residues include His185 and His205. The chain crosses the membrane as a helical span at residues 202–230; the sequence is NPFHCLSIVFLYGSVLLFCMHGGTILAVT. Fe cation contacts are provided by His222 and Glu237. Trp255 contacts a ubiquinone. Residues 264-290 form a helical membrane-spanning segment; it reads TMEGIHRWAWWFAVLTPITGGIGILLT. His269 is a Fe cation binding site.

It belongs to the reaction center PufL/M/PsbA/D family. Reaction center is composed of four bacteriochlorophylls, two bacteriopheophytins, two ubiquinones, one iron, and two highly hydrophobic polypeptide chains (designated L and M).

The protein resides in the cellular chromatophore membrane. Its function is as follows. The reaction center is a membrane-bound complex that mediates the initial photochemical event in the electron transfer process of photosynthesis. The protein is Reaction center protein M chain (pufM) of Roseobacter denitrificans (strain ATCC 33942 / OCh 114) (Erythrobacter sp. (strain OCh 114)).